Consider the following 1637-residue polypeptide: MAGQGDCCVKVAVRIRPQLSKEKIEGCHICTSVTPGEPQVLLGKDKAFTYDFVFDLDTWQEQIYSTCVSKLIEGCFEGYNATVLAYGQTGAGKTYTMGTGFDMATSEEEQGIIPRAIAHLFGGIAERKRRAQEQGVAGPEFKVSAQFLELYNEEILDLFDSTRDPDTRHRRSNIKIHEDANGGIYTTGVTSRLIHSQEELIQCLKQGALSRTTASTQMNVQSSRSHAIFTIHLCQMRMCTQPDLVNEAVTGLPDGTPPSSEYETLTAKFHFVDLAGSERLKRTGATGERAKEGISINCGLLALGNVISALGDQSKKVVHVPYRDSKLTRLLQDSLGGNSQTIMIACVSPSDRDFMETLNTLKYANRARNIKNKVVVNQDKTSQQISALRAEIARLQMELMEYKAGKRVIGEDGAEGYSDLFRENAMLQKENGALRLRVKAMQEAIDAINNRVTQLMSQEANLLLAKAGDGNEAIGALIQNYIREIEELRTKLLESEAMNESLRRSLSRASARSPYSLGASPAAPAFGGSPASSMEDASEVIRRAKQDLERLKKKEVRQRRKSPEKEAFKKRAKLQQENSEETDENEAEEEEEERDESGCEEEEGREDEDEDSGSEESLVDSDSDPEEKEVNFQADLADLTCEIEIKQKLIDELENSQRRLQTLKHQYEEKLILLQNKIRDTQLERDRVLQNLSTMECYTEEKANKIKADYEKRLREMNRDLQKLQAAQKEHARLLKNQSRYERELKKLQAEVAEMKKAKVALMKQMREEQQRRRLVETKRNREIAQLKKEQRRQEFQIRALESQKRQQEMVLRRKTQEVSALRRLAKPMSERVAGRAGLKPPMLDSGAEVSASTTSSEAESGARSVSSIVRQWNRKINHFLGDHPAPTVNGTRPARKKFQKKGASQSFSKAARLKWQSLERRIIDIVMQRMTIVNLEADMERLIKKREELFLLQEALRRKRERLQAESPEEEKGLQELAEEIEVLAANIDYINDGITDCQATIVQLEETKEELDSTDTSVVISSCSLAEARLLLDNFLKASIDKGLQVAQKEAQIRLLEGRLRQTDMAGSSQNHLLLDALREKAEAHPELQALIYNVQQENGYASTDEEISEFSEGSFSQSFTMKGSTSHDDFKFKSEPKLSAQMKAVSAECLGPPLDISTKNITKSLASLVEIKEDGVGFSVRDPYYRDRVSRTVSLPTRGSTFPRQSRATETSPLTRRKSYDRGQPIRSTDVGFTPPSSPPTRPRNDRNVFSRLTSNQSQGSALDKSDDSDSSLSEVLRGIISPVGGAKGARTAPLQCVSMAEGHTKPILCLDATDELLFTGSKDRSCKMWNLVTGQEIAALKGHPNNVVSIKYCSHSGLVFSVSTSYIKVWDIRDSAKCIRTLTSSGQVISGDACAATSTRAITSAQGEHQINQIALSPSGTMLYAASGNAVRIWELSRFQPVGKLTGHIGPVMCLTVTQTASQHDLVVTGSKDHYVKMFELGECVTGTIGPTHNFEPPHYDGIECLAIQGDILFSGSRDNGIKKWDLDQQELIQQIPNAHKDWVCALAFIPGRPMLLSACRAGVIKVWNVDNFTPIGEIKGHDSPINAICTNAKHIFTASSDCRVKLWNYVPGLTPCLPRRVLAIKGRATTLP.

Residues 8–370 (CVKVAVRIRP…LKYANRARNI (363 aa)) form the Kinesin motor domain. An ATP-binding site is contributed by 87–94 (GQTGAGKT). 2 coiled-coil regions span residues 376 to 604 (VNQD…EEEG) and 631 to 824 (NFQA…ALRR). Residues 400 to 1099 (MEYKAGKRVI…LQALIYNVQQ (700 aa)) are interaction with TRIM3. Positions 509–533 (ASARSPYSLGASPAAPAFGGSPASS) are enriched in low complexity. 2 disordered regions span residues 509–538 (ASARSPYSLGASPAAPAFGGSPASSMEDAS) and 552–628 (KKKE…PEEK). Positions 578 to 627 (NSEETDENEAEEEEEERDESGCEEEEGREDEDEDSGSEESLVDSDSDPEE) are enriched in acidic residues. At Ser579 the chain carries Phosphoserine. Phosphothreonine is present on Thr582. Disordered regions lie at residues 830-865 (SERVAGRAGLKPPMLDSGAEVSASTTSSEAESGARS) and 880-906 (FLGDHPAPTVNGTRPARKKFQKKGASQ). Low complexity predominate over residues 846–865 (SGAEVSASTTSSEAESGARS). Positions 928 to 1016 (MQRMTIVNLE…EETKEELDST (89 aa)) form a coiled coil. Phosphoserine is present on residues Ser1149, Ser1167, and Ser1215. The segment covering 1194 to 1217 (RTVSLPTRGSTFPRQSRATETSPL) has biased composition (polar residues). A disordered region spans residues 1194–1251 (RTVSLPTRGSTFPRQSRATETSPLTRRKSYDRGQPIRSTDVGFTPPSSPPTRPRNDRN). Thr1237 bears the Phosphothreonine mark. Ser1241 carries the phosphoserine modification. WD repeat units follow at residues 1306–1343 (GHTKPILCLDATDELLFTGSKDRSCKMWNLVTGQEIAA), 1346–1384 (GHPNNVVSIKYCSHSGLVFSVSTSYIKVWDIRDSAKCIR), 1410–1448 (QGEHQINQIALSPSGTMLYAASGNAVRIWELSRFQPVGK), 1451–1493 (GHIG…TGTI), 1502–1539 (PHYDGIECLAIQGDILFSGSRDNGIKKWDLDQQELIQQ), 1543–1582 (AHKDWVCALAFIPGRPMLLSACRAGVIKVWNVDNFTPIGE), and 1585–1622 (GHDSPINAICTNAKHIFTASSDCRVKLWNYVPGLTPCL).

The protein belongs to the TRAFAC class myosin-kinesin ATPase superfamily. Kinesin family. As to quaternary structure, interacts with TRIM3; the interaction positively affects motility of KIF21B. Interacts with GABARAP and GABA(A) receptor subunits: GABRG2, GABRA1 and GABRA2. May interact with GABA(A) receptor subunits: GABRB2 and GABRB3.

Its subcellular location is the cytoplasm. The protein resides in the cytoskeleton. It localises to the cell projection. It is found in the dendrite. The protein localises to the growth cone. Its subcellular location is the axon. The protein resides in the cytoplasmic vesicle. Its function is as follows. Plus-end directed microtubule-dependent motor protein which displays processive activity. Is involved in regulation of microtubule dynamics, synapse function and neuronal morphology, including dendritic tree branching and spine formation. Plays a role in lerning and memory. Involved in delivery of gamma-aminobutyric acid (GABA(A)) receptor to cell surface. The protein is Kinesin-like protein KIF21B (KIF21B) of Homo sapiens (Human).